A 1224-amino-acid chain; its full sequence is Probable serine/threonine-protein kinase DDB_G0292350 (1224 aa).

Disordered regions lie at residues 57–98 (MSGS…STQR) and 252–284 (SSPSSSSSSIKTKNTTSTTTTTTTTKNLNDISN). Low complexity-rich tracts occupy residues 58 to 74 (SGSIQSDLSSSDNFTSS) and 83 to 95 (SSSNTSNRNSDNS). 2 coiled-coil regions span residues 352–381 (LFKQQEKQHQQQQQQQQNQQDKEKFEKQNN) and 540–569 (DVQLSTKLNDEEETIEKEEEDLNSVDEYLT). Disordered stretches follow at residues 693–784 (QPIP…FVIT) and 815–836 (FTNNNNNNNGGSTITTTTTNNI). Over residues 743–768 (NNNNNNNNNINNNNINNNNINNNKNG) the composition is skewed to low complexity. The segment covering 772–784 (GETPSPSSSFVIT) has biased composition (polar residues). Positions 935–1193 (FRDKIKLGTG…PEMLLHHTFL (259 aa)) constitute a Protein kinase domain. Residues 941–949 (LGTGAFGNV) and Lys-964 contribute to the ATP site. Asp-1063 (proton acceptor) is an active-site residue.

Belongs to the protein kinase superfamily. Ser/Thr protein kinase family. Mg(2+) is required as a cofactor.

The catalysed reaction is L-seryl-[protein] + ATP = O-phospho-L-seryl-[protein] + ADP + H(+). The enzyme catalyses L-threonyl-[protein] + ATP = O-phospho-L-threonyl-[protein] + ADP + H(+). In Dictyostelium discoideum (Social amoeba), this protein is Probable serine/threonine-protein kinase DDB_G0292350.